A 611-amino-acid chain; its full sequence is Dihydroxy-acid dehydratase (611 aa).

Position 81 (Asp81) interacts with Mg(2+). Cys122 provides a ligand contact to [2Fe-2S] cluster. The Mg(2+) site is built by Asp123 and Lys124. N6-carboxylysine is present on Lys124. A [2Fe-2S] cluster-binding site is contributed by Cys195. Glu491 lines the Mg(2+) pocket. Ser517 acts as the Proton acceptor in catalysis.

Belongs to the IlvD/Edd family. In terms of assembly, homodimer. It depends on [2Fe-2S] cluster as a cofactor. Requires Mg(2+) as cofactor.

The catalysed reaction is (2R)-2,3-dihydroxy-3-methylbutanoate = 3-methyl-2-oxobutanoate + H2O. The enzyme catalyses (2R,3R)-2,3-dihydroxy-3-methylpentanoate = (S)-3-methyl-2-oxopentanoate + H2O. The protein operates within amino-acid biosynthesis; L-isoleucine biosynthesis; L-isoleucine from 2-oxobutanoate: step 3/4. It participates in amino-acid biosynthesis; L-valine biosynthesis; L-valine from pyruvate: step 3/4. Functions in the biosynthesis of branched-chain amino acids. Catalyzes the dehydration of (2R,3R)-2,3-dihydroxy-3-methylpentanoate (2,3-dihydroxy-3-methylvalerate) into 2-oxo-3-methylpentanoate (2-oxo-3-methylvalerate) and of (2R)-2,3-dihydroxy-3-methylbutanoate (2,3-dihydroxyisovalerate) into 2-oxo-3-methylbutanoate (2-oxoisovalerate), the penultimate precursor to L-isoleucine and L-valine, respectively. The protein is Dihydroxy-acid dehydratase of Agrobacterium fabrum (strain C58 / ATCC 33970) (Agrobacterium tumefaciens (strain C58)).